Consider the following 293-residue polypeptide: 4-hydroxy-tetrahydrodipicolinate synthase (293 aa).

Position 47 (Thr47) interacts with pyruvate. The active-site Proton donor/acceptor is the Tyr135. The active-site Schiff-base intermediate with substrate is Lys164. Ile205 lines the pyruvate pocket.

Belongs to the DapA family. Homotetramer; dimer of dimers.

It localises to the cytoplasm. The enzyme catalyses L-aspartate 4-semialdehyde + pyruvate = (2S,4S)-4-hydroxy-2,3,4,5-tetrahydrodipicolinate + H2O + H(+). The protein operates within amino-acid biosynthesis; L-lysine biosynthesis via DAP pathway; (S)-tetrahydrodipicolinate from L-aspartate: step 3/4. Catalyzes the condensation of (S)-aspartate-beta-semialdehyde [(S)-ASA] and pyruvate to 4-hydroxy-tetrahydrodipicolinate (HTPA). This chain is 4-hydroxy-tetrahydrodipicolinate synthase, found in Symbiobacterium thermophilum (strain DSM 24528 / JCM 14929 / IAM 14863 / T).